A 300-amino-acid chain; its full sequence is UPF0282 protein TGAM_0379 (300 aa).

This sequence belongs to the UPF0282 family.

This Thermococcus gammatolerans (strain DSM 15229 / JCM 11827 / EJ3) protein is UPF0282 protein TGAM_0379.